A 77-amino-acid chain; its full sequence is Rhodotorucin-A peptides type 2 (77 aa).

A propeptide spanning residues 1 to 3 is cleaved from the precursor; that stretch reads MVA. Residue C14 is the site of S-farnesyl cysteine attachment. A propeptide spanning residues 15–18 is cleaved from the precursor; it reads TVAK. C29 carries the S-farnesyl cysteine lipid modification. Residues 30–33 constitute a propeptide that is removed on maturation; that stretch reads TVSK. The S-farnesyl cysteine moiety is linked to residue C44. Residues 45-48 constitute a propeptide that is removed on maturation; sequence TVSK. C59 carries the S-farnesyl cysteine lipid modification. Positions 60-63 are excised as a propeptide; the sequence is TVSK. The S-farnesyl cysteine moiety is linked to residue C74. The propeptide occupies 75 to 77; sequence TVA.

The protein resides in the cell membrane. Functionally, rhodotorucin-A is a mating pheromone in cells of mating type A of Rhodosporidium toruloides. The chain is Rhodotorucin-A peptides type 2 (RHA2) from Rhodotorula toruloides (Yeast).